A 453-amino-acid chain; its full sequence is UDP-glycosyltransferase 74E1 (453 aa).

UDP-alpha-D-glucose is bound by residues serine 279, 332-334, 349-357, and 371-374; these read SPQ, HCGWNSTLE, and WADQ.

It belongs to the UDP-glycosyltransferase family.

The chain is UDP-glycosyltransferase 74E1 (UGT74E1) from Arabidopsis thaliana (Mouse-ear cress).